Reading from the N-terminus, the 51-residue chain is Small ribosomal subunit protein eS31 (51 aa).

Zn(2+) is bound by residues Cys22, Cys25, Cys40, and Cys43. The segment at Cys22–Cys43 adopts a C4-type zinc-finger fold.

Belongs to the eukaryotic ribosomal protein eS31 family. Part of the 30S ribosomal subunit. Zn(2+) serves as cofactor.

This Methanosphaera stadtmanae (strain ATCC 43021 / DSM 3091 / JCM 11832 / MCB-3) protein is Small ribosomal subunit protein eS31.